The following is a 1410-amino-acid chain: non-specific serine/threonine protein kinase (1410 aa).

One can recognise a Protein kinase domain in the interval 27–299 (THYVSQLNNS…LLEKYRTIYF (273 aa)). Residues 33 to 41 (LNNSRFLKT) and K54 contribute to the ATP site. The active-site Proton acceptor is the D147. HEAT repeat units lie at residues 441–478 (TKLDRTLPYLVAALEDDSTRVKVMAMNCVTTLIKEVKH), 485–525 (NIFV…KANL), 556–594 (RKLQQLFEDLTVSILTDPEISVKVALLKNILPLCKYFGR), 596–633 (KTNDVILSHLITYLNDRDPALRMYLVECISGIAILLGP), and 635–672 (TMEQYILPLIIQTITDEEELVVVSVLKNLKDLLKTRFV). WD repeat units lie at residues 1037-1076 (FDGTLLQSEVLLGTKSFMIYGSDQGALTVWDIDRLANEKS), 1187-1226 (ADYGCTISMVLDDKNNLLFFGTVSGIIEMWDARYFVQIRA), and 1230-1273 (GESL…CKHV).

This sequence belongs to the protein kinase superfamily. Ser/Thr protein kinase family. In terms of assembly, component of the autophagy-specific VPS34 PI3-kinase complex I composed of VPS15, VPS30, VPS34, ATG14 and ATG38; and of the VPS34 PI3-kinase complex II composed of VPS15, VPS30, VPS34 and VPS38. Post-translationally, autophosphorylated.

The protein resides in the golgi apparatus. It is found in the trans-Golgi network membrane. The protein localises to the endosome membrane. The enzyme catalyses L-seryl-[protein] + ATP = O-phospho-L-seryl-[protein] + ADP + H(+). It catalyses the reaction L-threonyl-[protein] + ATP = O-phospho-L-threonyl-[protein] + ADP + H(+). Functionally, serine/threonine-protein kinase that plays a role in signaling in modulation of host immune response, intracellular survival and virulence. Required for impediment of phagosomal maturation in THP-1 macrophages. Regulatory subunit of the autophagy-specific VPS34 PI3-kinase complex I essential to recruit the ATG8-phosphatidylinositol conjugate and the ATG12-ATG5 conjugate to the pre-autophagosomal structure. Within the PS34 PI3-kinase complex I, VPS15-mediated phosphorylation of VPS34 may be required for recruiting VPS34 to the membrane but not for activation of its PI3K activity. Is also involved in endosome-to-Golgi retrograde transport as part of the VPS34 PI3-kinase complex II. This second complex is required for the endosome-to-Golgi retrieval of PEP1 and KEX2, and the recruitment of VPS5 and VPS7, two components of the retromer complex, to endosomal membranes (probably through the synthesis of a specific pool of phosphatidylinositol 3-phosphate recruiting the retromer to the endosomes). By regulating VPS34 kinase activity, VPS15 appears to be essential for the efficient delivery of soluble hydrolases to the yeast vacuole. The sequence is that of non-specific serine/threonine protein kinase from Candida glabrata (strain ATCC 2001 / BCRC 20586 / JCM 3761 / NBRC 0622 / NRRL Y-65 / CBS 138) (Yeast).